The chain runs to 183 residues: Probable actin-related protein 2/3 complex subunit 3 (183 aa).

Belongs to the ARPC3 family. As to quaternary structure, component of the Arp2/3 complex.

It is found in the cytoplasm. It localises to the cytoskeleton. In terms of biological role, functions as a component of the Arp2/3 complex which is involved in regulation of actin polymerization and together with an activating nucleation-promoting factor (NPF) mediates the formation of branched actin networks. The chain is Probable actin-related protein 2/3 complex subunit 3 (arx-5) from Caenorhabditis elegans.